Here is a 414-residue protein sequence, read N- to C-terminus: Gamma-glutamyl phosphate reductase (414 aa).

This sequence belongs to the gamma-glutamyl phosphate reductase family.

Its subcellular location is the cytoplasm. The catalysed reaction is L-glutamate 5-semialdehyde + phosphate + NADP(+) = L-glutamyl 5-phosphate + NADPH + H(+). It functions in the pathway amino-acid biosynthesis; L-proline biosynthesis; L-glutamate 5-semialdehyde from L-glutamate: step 2/2. Catalyzes the NADPH-dependent reduction of L-glutamate 5-phosphate into L-glutamate 5-semialdehyde and phosphate. The product spontaneously undergoes cyclization to form 1-pyrroline-5-carboxylate. The chain is Gamma-glutamyl phosphate reductase from Caldanaerobacter subterraneus subsp. tengcongensis (strain DSM 15242 / JCM 11007 / NBRC 100824 / MB4) (Thermoanaerobacter tengcongensis).